Consider the following 430-residue polypeptide: Phosphoglucosamine mutase (430 aa).

The active-site Phosphoserine intermediate is the serine 93. Mg(2+)-binding residues include serine 93, aspartate 227, aspartate 229, and aspartate 231. At serine 93 the chain carries Phosphoserine.

This sequence belongs to the phosphohexose mutase family. Mg(2+) is required as a cofactor. Post-translationally, activated by phosphorylation.

The catalysed reaction is alpha-D-glucosamine 1-phosphate = D-glucosamine 6-phosphate. Functionally, catalyzes the conversion of glucosamine-6-phosphate to glucosamine-1-phosphate. This Thermosipho africanus (strain TCF52B) protein is Phosphoglucosamine mutase.